Reading from the N-terminus, the 51-residue chain is Large ribosomal subunit protein eL39 (51 aa).

The segment covering 1-15 (MPSHKSFRTKQKLAK) has biased composition (basic residues). Residues 1-21 (MPSHKSFRTKQKLAKAARQNR) form a disordered region.

This sequence belongs to the eukaryotic ribosomal protein eL39 family. As to quaternary structure, component of the large ribosomal subunit (LSU). Mature yeast ribosomes consist of a small (40S) and a large (60S) subunit. The 40S small subunit contains 1 molecule of ribosomal RNA (18S rRNA) and at least 33 different proteins. The large 60S subunit contains 3 rRNA molecules (25S, 5.8S and 5S rRNA) and at least 46 different proteins. eL39 interacts with yih1.

It is found in the cytoplasm. Component of the ribosome, a large ribonucleoprotein complex responsible for the synthesis of proteins in the cell. The small ribosomal subunit (SSU) binds messenger RNAs (mRNAs) and translates the encoded message by selecting cognate aminoacyl-transfer RNA (tRNA) molecules. The large subunit (LSU) contains the ribosomal catalytic site termed the peptidyl transferase center (PTC), which catalyzes the formation of peptide bonds, thereby polymerizing the amino acids delivered by tRNAs into a polypeptide chain. The nascent polypeptides leave the ribosome through a tunnel in the LSU and interact with protein factors that function in enzymatic processing, targeting, and the membrane insertion of nascent chains at the exit of the ribosomal tunnel. The polypeptide is Large ribosomal subunit protein eL39 (rpl39) (Schizosaccharomyces pombe (strain 972 / ATCC 24843) (Fission yeast)).